The sequence spans 685 residues: tRNA-dihydrouridine(47) synthase [NAD(P)(+)]-like (685 aa).

Over residues 1–12 (MAATAAAAAAAP) the composition is skewed to low complexity. Disordered stretches follow at residues 1 to 91 (MAAT…SSSH), 209 to 234 (AAND…PLCN), and 257 to 314 (LIDN…SCRT). Residues 13 to 29 (PADPPDSSPAASSPPRP) show a composition bias toward pro residues. The segment at 87–118 (KSSSHLCIEVGKSGNVSSCKYGDSCRFSHDID) adopts a C3H1-type zinc-finger fold. Basic and acidic residues-rich tracts occupy residues 209-221 (AAND…HDNL) and 273-284 (SKVESDEIDKHG). Over residues 287–314 (TLNTNTESEDPNLSNGLEPSNNSSSCRT) the composition is skewed to polar residues. FMN is bound by residues 338–340 (PLT) and Gln-392. Cys-423 (proton donor) is an active-site residue. Residues Lys-462, His-492, 525–527 (NGD), and 550–551 (AR) contribute to the FMN site.

It belongs to the Dus family. Dus3 subfamily. It depends on FMN as a cofactor.

It carries out the reaction 5,6-dihydrouridine(47) in tRNA + NAD(+) = uridine(47) in tRNA + NADH + H(+). The enzyme catalyses 5,6-dihydrouridine(47) in tRNA + NADP(+) = uridine(47) in tRNA + NADPH + H(+). The catalysed reaction is a 5,6-dihydrouridine in mRNA + NAD(+) = a uridine in mRNA + NADH + H(+). It catalyses the reaction a 5,6-dihydrouridine in mRNA + NADP(+) = a uridine in mRNA + NADPH + H(+). In terms of biological role, catalyzes the synthesis of dihydrouridine, a modified base found in the D-loop of most tRNAs. Specifically modifies U47 in cytoplasmic tRNAs. Catalyzes the synthesis of dihydrouridine in some mRNAs, thereby affecting their translation. In Oryza sativa subsp. japonica (Rice), this protein is tRNA-dihydrouridine(47) synthase [NAD(P)(+)]-like.